A 379-amino-acid polypeptide reads, in one-letter code: MGYARKVGWVTAGLVIGAGACYCIYRLTRGRKQNKEKMAEGGSGDVDDAGDCSGARYNDWSDDDDDSNESKSIVWYPPWARIGTEAGTRARARARARATRARRAVQKRASPNSDDTILSPQELQKVLCLVEMSEKPYILEAALIALGNNAAYAFNRDIIRDLGGLPIVAKILNTRDPIVKEKALIVLNNLSVNAENQRRLKVYMNQVCDDTITSRLNSSVQLAGLRLLTNMTVTNEYQHMLANSISDFFRLFSAGNEETKLQVLKLLLNLAENPAMTRELLRAQVPSSLGSLFNKKENKEVILKLLVIFENINDNFKWEENEPTQNQFGEGSLFFFLKEFQVCADKVLGIESHHDFLVKVKVGKFMAKLAEHMFPKSQE.

Over 1–6 the chain is Mitochondrial intermembrane; that stretch reads MGYARK. 2 mitochondrion outer membrane (MOM)-targeting sequence regions span residues 1–6 and 26–37; these read MGYARK and RLTRGRKQNKEK. The chain crosses the membrane as a helical; Signal-anchor span at residues 7–29; that stretch reads VGWVTAGLVIGAGACYCIYRLTR. At 30–379 the chain is on the cytoplasmic side; sequence GRKQNKEKMA…AEHMFPKSQE (350 aa). Ser-61, Ser-67, and Ser-72 each carry phosphoserine. A nuclear localization signal region spans residues 89–98; it reads RARARARARA. Ser-110 bears the Phosphoserine mark. ARM repeat units lie at residues 111-151, 153-192, and 233-272; these read PNSD…NNAA, AFNRDIIRDLGGLPIVAKILNTRDPIVKEKALIVLNNLSV, and VTNEYQHMLANSISDFFRLFSAGNEETKLQVLKLLLNLAE.

The protein belongs to the eutherian X-chromosome-specific Armcx family. As to quaternary structure, interacts (via ARM domain) with MIRO1, MIRO2 and TRAK2. The interaction with Miro is calcium-dependent. Interacts with SOX10.

The protein resides in the mitochondrion outer membrane. It is found in the cytoplasm. Its subcellular location is the nucleus. Regulates mitochondrial aggregation and transport in axons in living neurons. May link mitochondria to the TRAK2-kinesin motor complex via its interaction with Miro and TRAK2. Mitochondrial distribution and dynamics is regulated through ARMCX3 protein degradation, which is promoted by PCK and negatively regulated by WNT1. Enhances the SOX10-mediated transactivation of the neuronal acetylcholine receptor subunit alpha-3 and beta-4 subunit gene promoters. This Pongo abelii (Sumatran orangutan) protein is Armadillo repeat-containing X-linked protein 3 (ARMCX3).